Consider the following 118-residue polypeptide: Large ribosomal subunit protein bL20 (118 aa).

The protein belongs to the bacterial ribosomal protein bL20 family.

Functionally, binds directly to 23S ribosomal RNA and is necessary for the in vitro assembly process of the 50S ribosomal subunit. It is not involved in the protein synthesizing functions of that subunit. This Ralstonia nicotianae (strain ATCC BAA-1114 / GMI1000) (Ralstonia solanacearum) protein is Large ribosomal subunit protein bL20.